Here is a 51-residue protein sequence, read N- to C-terminus: Basic phospholipase A2 homolog BmatTX-I (51 aa).

Cysteine 28 and cysteine 44 form a disulfide bridge.

Monomer. As to expression, expressed by the venom gland.

It localises to the secreted. Snake venom phospholipase A2 homolog that lacks enzymatic activity. Shows high myotoxic activity, neutrophile activation (demonstrated by activation induction of IL-1beta production), slight cytotoxicity against Jurkat (leukemia T) and SK-BR-3 (breast adenocarcinoma) tumor cell lines, and slight antiparasitic activity against promastigote forms of Leishmania amazonensis. A model of myotoxic mechanism has been proposed: an apo Lys49-PLA2 is activated by the entrance of a hydrophobic molecule (e.g. fatty acid) at the hydrophobic channel of the protein leading to a reorientation of a monomer. This reorientation causes a transition between 'inactive' to 'active' states, causing alignment of C-terminal and membrane-docking sites (MDoS) side-by-side and putting the membrane-disruption sites (MDiS) in the same plane, exposed to solvent and in a symmetric position for both monomers. The MDoS region stabilizes the toxin on membrane by the interaction of charged residues with phospholipid head groups. Subsequently, the MDiS region destabilizes the membrane with penetration of hydrophobic residues. This insertion causes a disorganization of the membrane, allowing an uncontrolled influx of ions (i.e. calcium and sodium), and eventually triggering irreversible intracellular alterations and cell death. The sequence is that of Basic phospholipase A2 homolog BmatTX-I from Bothrops mattogrossensis (Pitviper).